The primary structure comprises 209 residues: tRNA(Phe) 7-((3-amino-3-carboxypropyl)-4-demethylwyosine(37)-N(4))-methyltransferase (209 aa).

Belongs to the TYW3 family.

It catalyses the reaction 4-demethyl-7-[(3S)-3-amino-3-carboxypropyl]wyosine(37) in tRNA(Phe) + S-adenosyl-L-methionine = 7-[(3S)-3-amino-3-carboxypropyl]wyosine(37) in tRNA(Phe) + S-adenosyl-L-homocysteine + H(+). Functionally, S-adenosyl-L-methionine-dependent methyltransferase that acts as a component of the wyosine derivatives biosynthesis pathway. Probably methylates N-4 position of wybutosine-86 to produce wybutosine-72. In Saccharolobus solfataricus (strain ATCC 35092 / DSM 1617 / JCM 11322 / P2) (Sulfolobus solfataricus), this protein is tRNA(Phe) 7-((3-amino-3-carboxypropyl)-4-demethylwyosine(37)-N(4))-methyltransferase.